The primary structure comprises 478 residues: PRAME family member 4 (478 aa).

One copy of the LRR 1; degenerate repeat lies at 99–126 (RWKLQVLDLQDVCENFWMVWSEAMAHGC). Residues 181–205 (HLCCKKLKILGMPFRNIRSILKMVN) form an LRR 2; degenerate repeat. An LRR 3; degenerate repeat occupies 206–232 (LDCIQEVEVNCKWVLPILTQFTPYLGH). The stretch at 233–268 (MRNLQKLILSHMDVSRYVSPEQKKEIVTQFTTQFLK) is one LRR 4; degenerate repeat. LRR repeat units follow at residues 269-294 (LRCL…LSCL), 295-326 (KTSL…SQLK), 327-347 (TLDL…QILL), 351-378 (AATL…ALSR), and 379-403 (CFEL…LLSH).

The protein belongs to the PRAME family.

The chain is PRAME family member 4 from Homo sapiens (Human).